Reading from the N-terminus, the 154-residue chain is uncharacterized protein (154 aa).

2 helical membrane passes run 19–39 and 51–71; these read LFAY…GLLL and ADQV…LLFA.

It is found in the cell membrane. This is an uncharacterized protein from Mycobacterium tuberculosis (strain CDC 1551 / Oshkosh).